The chain runs to 328 residues: Flotillin-like protein FloA (328 aa).

2 helical membrane passes run 1–21 (MFGL…LVLF) and 26–46 (VGLW…TLVG).

It belongs to the flotillin-like FloA family. In terms of assembly, homooligomerizes.

Its subcellular location is the cell membrane. It is found in the membrane raft. Found in functional membrane microdomains (FMM) that may be equivalent to eukaryotic membrane rafts. FMMs are highly dynamic and increase in number as cells age. Flotillins are thought to be important factors in membrane fluidity. This Staphylococcus haemolyticus (strain JCSC1435) protein is Flotillin-like protein FloA.